Consider the following 349-residue polypeptide: NADH-ubiquinone oxidoreductase chain 2 (349 aa).

10 helical membrane passes run 3 to 23, 25 to 45, 66 to 86, 98 to 118, 149 to 171, 178 to 197, 202 to 219, 240 to 260, 274 to 294, and 319 to 339; these read PYVL…TFAS, HWLL…PIMA, AAAM…EWEI, VMLA…LPEV, INSS…GGLN, ILAY…LQYA, LLSL…FLTL, LAAL…LSGF, GLPL…YFYL, and FTLI…LLPL.

Belongs to the complex I subunit 2 family.

The protein resides in the mitochondrion inner membrane. The catalysed reaction is a ubiquinone + NADH + 5 H(+)(in) = a ubiquinol + NAD(+) + 4 H(+)(out). Core subunit of the mitochondrial membrane respiratory chain NADH dehydrogenase (Complex I) that is believed to belong to the minimal assembly required for catalysis. Complex I functions in the transfer of electrons from NADH to the respiratory chain. The immediate electron acceptor for the enzyme is believed to be ubiquinone. This Salmo salar (Atlantic salmon) protein is NADH-ubiquinone oxidoreductase chain 2 (MT-ND2).